A 563-amino-acid chain; its full sequence is MSEQKLALNEYLKIDSDYLRGDIQEGLDTQVTGSFSDGDQQLIKFHGFYQQDDRDLRNERKEQKLEPLHSFMLRARVPGGICTPAQWLEVDKISSTLTTSNSIRLTTRQTFQYHGIPKRNLKTLIQGLDRAALDSIAACGDVNRNVMCNPNPVESKLHAQAYAVAKHLSDHLLPHTRAYAEIWLDEEKLLGTETVEPVYGKTYLPRKFKMAVAVPPHNDVDVYTNDLGFIAVSEAGELIGFNLVAGGGMGSTHGEVETFPRLADDFGFIKTDDVTKFAEAVMTVQRDWGNRVVRKRARLKYTIVDHGYDAFKAEVEKRAGVKFEPKRDVIIGDRGDRYGWVEGIDNKFHLTLFIESGRIKDMPGQTLQTGLREIAKIHKGDFRMTSNQNMIIAGVAAQDKAEIEGLARKHGLLGQVLSGTRGHSIACVALPTCPLAMAEAERYFPEFIDHIDALQAKHGISEQSIVVRMTGCPNGCARPFAAEIGLVGKAPGRYNLYLGASFEGTRLNKMHKENIQEAEILAELDTLFGRYATERDAGETFGNFTVRIGVVKAVNDAAKDFHA.

Positions 427, 433, 472, and 476 each coordinate [4Fe-4S] cluster. Position 476 (cysteine 476) interacts with siroheme.

The protein belongs to the nitrite and sulfite reductase 4Fe-4S domain family. In terms of assembly, alpha(8)-beta(8). The alpha component is a flavoprotein, the beta component is a hemoprotein. Requires siroheme as cofactor. [4Fe-4S] cluster serves as cofactor.

The catalysed reaction is hydrogen sulfide + 3 NADP(+) + 3 H2O = sulfite + 3 NADPH + 4 H(+). It functions in the pathway sulfur metabolism; hydrogen sulfide biosynthesis; hydrogen sulfide from sulfite (NADPH route): step 1/1. Functionally, component of the sulfite reductase complex that catalyzes the 6-electron reduction of sulfite to sulfide. This is one of several activities required for the biosynthesis of L-cysteine from sulfate. The polypeptide is Sulfite reductase [NADPH] hemoprotein beta-component (Shewanella frigidimarina (strain NCIMB 400)).